Consider the following 255-residue polypeptide: MKRESNIQVLSRGQKDQPVSQIYQVSTMTSLLDGVYDGDFELSEIPKYGDFGIGTFNKLDGELIGFDGEFYRLRSDGTATPVQNGDRSPFCSFTFFTPDMTHKIDAKMTREDFEKEINSMLPSRNLFYAIRIDGLFKKVQTRTVELQEKPYVPMVEAVKTQPIFNFDNVRGTIVGFLTPAYANGIAVSGYHLHFIDEGRNSGGHVFDYVLEDCTVTISQKMNMNLRLPNTADFFNANLDNPDFAKDIETTEGSPE.

The protein belongs to the alpha-acetolactate decarboxylase family.

It catalyses the reaction (2S)-2-acetolactate + H(+) = (R)-acetoin + CO2. It functions in the pathway polyol metabolism; (R,R)-butane-2,3-diol biosynthesis; (R,R)-butane-2,3-diol from pyruvate: step 2/3. Functionally, converts acetolactate into acetoin, which can be excreted by the cells. This may be a mechanism for controlling the internal pH of cells in the stationary stage. This is Alpha-acetolactate decarboxylase (alsD) from Bacillus subtilis (strain 168).